We begin with the raw amino-acid sequence, 474 residues long: Glutathione synthetase (474 aa).

Alanine 2 carries the N-acetylalanine modification. Arginine 125 provides a ligand contact to substrate. Glutamate 144 is a binding site for ATP. The Mg(2+) site is built by glutamate 144 and asparagine 146. Substrate contacts are provided by residues 148-151 (ISAS), 214-216 (ERN), glutamine 220, and 267-270 (RDGY). ATP contacts are provided by residues lysine 305, 364 to 373 (KPQREGGGNN), tyrosine 375, and 398 to 401 (MEKI). Glutamate 368 is a binding site for Mg(2+). Serine 415 bears the Phosphoserine mark. An ATP-binding site is contributed by glutamate 425. Substrate is bound at residue arginine 450. 2 residues coordinate ATP: lysine 452 and aspartate 458. Substrate is bound at residue 461–462 (VA).

This sequence belongs to the eukaryotic GSH synthase family. As to quaternary structure, homodimer. The cofactor is Mg(2+).

The enzyme catalyses gamma-L-glutamyl-L-cysteine + glycine + ATP = glutathione + ADP + phosphate + H(+). It carries out the reaction gamma-L-glutamyl-(2S)-2-aminobutanoate + glycine + ATP = ophthalmate + ADP + phosphate + H(+). Its pathway is sulfur metabolism; glutathione biosynthesis; glutathione from L-cysteine and L-glutamate: step 2/2. In terms of biological role, catalyzes the production of glutathione from gamma-glutamylcysteine and glycine in an ATP-dependent manner. Glutathione (gamma-glutamylcysteinylglycine, GSH) is the most abundant intracellular thiol in living aerobic cells and is required for numerous processes including the protection of cells against oxidative damage, amino acid transport, the detoxification of foreign compounds, the maintenance of protein sulfhydryl groups in a reduced state and acts as a cofactor for a number of enzymes. Participates in ophthalmate biosynthesis in hepatocytes. The sequence is that of Glutathione synthetase from Homo sapiens (Human).